Reading from the N-terminus, the 353-residue chain is Ribosomal RNA small subunit methyltransferase H (353 aa).

Residues 39-41 (AGH), aspartate 58, phenylalanine 90, aspartate 108, and glutamine 115 each bind S-adenosyl-L-methionine. Positions 334–353 (SEDGVRGAHGHRRRTQARRG) are disordered. The span at 341–353 (AHGHRRRTQARRG) shows a compositional bias: basic residues.

The protein belongs to the methyltransferase superfamily. RsmH family.

The protein resides in the cytoplasm. It carries out the reaction cytidine(1402) in 16S rRNA + S-adenosyl-L-methionine = N(4)-methylcytidine(1402) in 16S rRNA + S-adenosyl-L-homocysteine + H(+). Functionally, specifically methylates the N4 position of cytidine in position 1402 (C1402) of 16S rRNA. In Bifidobacterium animalis subsp. lactis (strain AD011), this protein is Ribosomal RNA small subunit methyltransferase H.